A 1372-amino-acid polypeptide reads, in one-letter code: DNA-directed RNA polymerase subunit beta (1372 aa).

Belongs to the RNA polymerase beta chain family. As to quaternary structure, the RNAP catalytic core consists of 2 alpha, 1 beta, 1 beta' and 1 omega subunit. When a sigma factor is associated with the core the holoenzyme is formed, which can initiate transcription.

The enzyme catalyses RNA(n) + a ribonucleoside 5'-triphosphate = RNA(n+1) + diphosphate. Its function is as follows. DNA-dependent RNA polymerase catalyzes the transcription of DNA into RNA using the four ribonucleoside triphosphates as substrates. In Rickettsia bellii (strain RML369-C), this protein is DNA-directed RNA polymerase subunit beta.